The following is a 460-amino-acid chain: Cysteine--tRNA ligase (460 aa).

Zn(2+) is bound at residue Cys-28. A 'HIGH' region motif is present at residues 30 to 40 (MTVYDYCHLGH). Residues Cys-209, His-234, and Glu-238 each contribute to the Zn(2+) site. The short motif at 266–270 (KMSKS) is the 'KMSKS' region element. An ATP-binding site is contributed by Lys-269.

Belongs to the class-I aminoacyl-tRNA synthetase family. In terms of assembly, monomer. Requires Zn(2+) as cofactor.

The protein resides in the cytoplasm. It carries out the reaction tRNA(Cys) + L-cysteine + ATP = L-cysteinyl-tRNA(Cys) + AMP + diphosphate. The chain is Cysteine--tRNA ligase from Pseudomonas putida (strain ATCC 700007 / DSM 6899 / JCM 31910 / BCRC 17059 / LMG 24140 / F1).